The following is a 388-amino-acid chain: Galactokinase (388 aa).

33 to 36 (EHTD) is a substrate binding site. ATP-binding positions include Ser-67 and 124–130 (GSGLSSS). Residues Ser-130 and Glu-162 each contribute to the Mg(2+) site. Residue Asp-174 is the Proton acceptor of the active site. Tyr-224 is a substrate binding site.

The protein belongs to the GHMP kinase family. GalK subfamily.

The protein localises to the cytoplasm. The catalysed reaction is alpha-D-galactose + ATP = alpha-D-galactose 1-phosphate + ADP + H(+). The protein operates within carbohydrate metabolism; galactose metabolism. In terms of biological role, catalyzes the transfer of the gamma-phosphate of ATP to D-galactose to form alpha-D-galactose-1-phosphate (Gal-1-P). This chain is Galactokinase, found in Streptococcus thermophilus.